We begin with the raw amino-acid sequence, 831 residues long: Translation initiation factor IF-2 (831 aa).

Positions 116–157 (IEPLETDKEVEQKQQNTEENKVEVSAKIVQDDEDIPSQIPKK) are disordered. Residues 117 to 139 (EPLETDKEVEQKQQNTEENKVEV) show a composition bias toward basic and acidic residues. In terms of domain architecture, tr-type G spans 329-499 (TRAPVVTVMG…LLIAEMQDLK (171 aa)). The tract at residues 338–345 (GHVDHGKT) is G1. 338-345 (GHVDHGKT) provides a ligand contact to GTP. Residues 363–367 (GITQH) form a G2 region. A G3 region spans residues 385-388 (DTPG). GTP contacts are provided by residues 385–389 (DTPGH) and 439–442 (NKID). Residues 439–442 (NKID) form a G4 region. Positions 475–477 (SAL) are G5.

This sequence belongs to the TRAFAC class translation factor GTPase superfamily. Classic translation factor GTPase family. IF-2 subfamily.

It localises to the cytoplasm. One of the essential components for the initiation of protein synthesis. Protects formylmethionyl-tRNA from spontaneous hydrolysis and promotes its binding to the 30S ribosomal subunits. Also involved in the hydrolysis of GTP during the formation of the 70S ribosomal complex. This Rickettsia conorii (strain ATCC VR-613 / Malish 7) protein is Translation initiation factor IF-2.